A 402-amino-acid chain; its full sequence is NADH-quinone oxidoreductase subunit D (402 aa).

It belongs to the complex I 49 kDa subunit family. In terms of assembly, NDH-1 is composed of 14 different subunits. Subunits NuoB, C, D, E, F, and G constitute the peripheral sector of the complex.

The protein localises to the cell inner membrane. It catalyses the reaction a quinone + NADH + 5 H(+)(in) = a quinol + NAD(+) + 4 H(+)(out). Its function is as follows. NDH-1 shuttles electrons from NADH, via FMN and iron-sulfur (Fe-S) centers, to quinones in the respiratory chain. The immediate electron acceptor for the enzyme in this species is believed to be ubiquinone. Couples the redox reaction to proton translocation (for every two electrons transferred, four hydrogen ions are translocated across the cytoplasmic membrane), and thus conserves the redox energy in a proton gradient. The sequence is that of NADH-quinone oxidoreductase subunit D from Azorhizobium caulinodans (strain ATCC 43989 / DSM 5975 / JCM 20966 / LMG 6465 / NBRC 14845 / NCIMB 13405 / ORS 571).